The following is a 436-amino-acid chain: Bifunctional IPC transferase and DIPP synthase (436 aa).

Residues 11–241 (GVGAAVLAAG…LSEEMVLGWA (231 aa)) form a mobA-like NTP transferase region. CTP contacts are provided by residues 17–19 (LAA) and Lys32. The segment at 242-435 (ASGNDGPVSR…RRLLALKRGR (194 aa)) is CDP-alcohol phosphatidyltransferases. 3 consecutive transmembrane segments (helical) span residues 275–295 (VSLL…AGRL), 349–371 (AGTR…VSYT), and 397–417 (LAVL…LATG).

The protein in the N-terminal section; belongs to the MobA family. In the C-terminal section; belongs to the CDP-alcohol phosphatidyltransferase class-I family.

The protein localises to the membrane. The enzyme catalyses 1D-myo-inositol 3-phosphate + CTP + H(+) = CDP-1L-myo-inositol + diphosphate. It carries out the reaction CDP-1L-myo-inositol + 1D-myo-inositol 3-phosphate = bis(1L-myo-inositol) 3,1'-phosphate 1-phosphate + CMP + H(+). Its function is as follows. Involved in biosynthesis of di-myo-inositol phosphate (DIP), a widespread organic solute in microorganisms adapted to hot environments. Catalyzes the condensation of CTP and L-myo-inositol-1-phosphate into CDP-L-myo-inositol, as well as the biosynthesis of di-myo-inositol-1,3'-phosphate-1'-phosphate (DIPP) from CDP-L-myo-inositol and L-myo-inositol-1-phosphate. The chain is Bifunctional IPC transferase and DIPP synthase from Rubrobacter xylanophilus (strain DSM 9941 / JCM 11954 / NBRC 16129 / PRD-1).